The chain runs to 334 residues: Serpentine receptor class alpha-11 (334 aa).

Over 1–23 (MTTNNPVCASDAHMEMYSSKLYT) the chain is Extracellular. A helical transmembrane segment spans residues 24-44 (SALFLNLIIATTSMILTGFAI). The Cytoplasmic portion of the chain corresponds to 45–57 (QKLFMESIINIST). A helical membrane pass occupies residues 58–80 (RMFLFCGLMCCSLHQTAYIVLRI). At 81–105 (QVIYQVFFKLSEPCNLYYPAIDCKY) the chain is on the extracellular side. A helical transmembrane segment spans residues 106-126 (VTFSLVAGNTGMIFIQSAMTI). Residues 127 to 145 (DRIFATIFPKLWPKLKYWP) are Cytoplasmic-facing. The chain crosses the membrane as a helical span at residues 146-166 (GVVLSILMIACNYANVQIIFW). Over 167–191 (GDPLTEYVPTCGQFPSKSVNRFQTF) the chain is Extracellular. Residues 192–212 (LAIALYMSIAHMVINVIILYI) traverse the membrane as a helical segment. Over 213–239 (NVLQDRQQSKSFNVNQRYQSREALKSS) the chain is Cytoplasmic. Residues 240–260 (QAIFFLSMSQFFACLIYSVFT) traverse the membrane as a helical segment. Residues 261–277 (KVFLEFQLNLSPLQSGL) lie on the Extracellular side of the membrane. A helical membrane pass occupies residues 278–298 (VLALSYTTPYACIAIPSLIIF). Residues 299-334 (TFRFIKNQRLRNINELRSQTETGDECMRKIAKIWEK) are Cytoplasmic-facing.

Belongs to the nematode receptor-like protein sra family. As to expression, expressed in interneurons AIY and AVB in L1 larvae. In adults, strong expression is seen in AIY and AIA but only weak expression in AVB.

It is found in the membrane. Its function is as follows. A G protein-coupled receptor required for olfactory imprinting a requisite in ordorant response such as benzaldehyde and isoamylalcohol. This chain is Serpentine receptor class alpha-11 (sra-11), found in Caenorhabditis elegans.